A 275-amino-acid chain; its full sequence is Large ribosomal subunit protein uL2 (275 aa).

Over residues 28-38 (EPYAPLLDKKS) the composition is skewed to basic and acidic residues. Disordered stretches follow at residues 28-55 (EPYAPLLDKKSKSGGRNNTGRITTRHVG) and 224-258 (AMNPVDHPHGGGEGRTSGGRHPVSPWGIPTKGYKT).

It belongs to the universal ribosomal protein uL2 family. Part of the 50S ribosomal subunit. Forms a bridge to the 30S subunit in the 70S ribosome.

Its function is as follows. One of the primary rRNA binding proteins. Required for association of the 30S and 50S subunits to form the 70S ribosome, for tRNA binding and peptide bond formation. It has been suggested to have peptidyltransferase activity; this is somewhat controversial. Makes several contacts with the 16S rRNA in the 70S ribosome. The protein is Large ribosomal subunit protein uL2 of Cellvibrio japonicus (strain Ueda107) (Pseudomonas fluorescens subsp. cellulosa).